The chain runs to 182 residues: MPLLNSIATPYSEALLQVAEARGESEQTANQVKELLQIWESSPELRNAMTSQVLEPEAKKAALMKLFSEQLTPAFTNLLKLLADRKRISALEAVLLRFLELYRDIHRIALAEVTSAIPLNEEQKELLRKKIQVVAGTNNVELKLLVDPSMIGGFIVSVGSQVIDASLAGQVRRLGLALAKLG.

The protein belongs to the ATPase delta chain family. F-type ATPases have 2 components, F(1) - the catalytic core - and F(0) - the membrane proton channel. F(1) has five subunits: alpha(3), beta(3), gamma(1), delta(1), epsilon(1). CF(0) has four main subunits: a(1), b(1), b'(1) and c(10-14). The alpha and beta chains form an alternating ring which encloses part of the gamma chain. F(1) is attached to F(0) by a central stalk formed by the gamma and epsilon chains, while a peripheral stalk is formed by the delta, b and b' chains.

The protein localises to the plastid. The protein resides in the organellar chromatophore thylakoid membrane. Functionally, f(1)F(0) ATP synthase produces ATP from ADP in the presence of a proton or sodium gradient. F-type ATPases consist of two structural domains, F(1) containing the extramembraneous catalytic core and F(0) containing the membrane proton channel, linked together by a central stalk and a peripheral stalk. During catalysis, ATP synthesis in the catalytic domain of F(1) is coupled via a rotary mechanism of the central stalk subunits to proton translocation. Its function is as follows. This protein is part of the stalk that links CF(0) to CF(1). It either transmits conformational changes from CF(0) to CF(1) or is implicated in proton conduction. The chain is ATP synthase subunit delta, organellar chromatophore from Paulinella chromatophora.